A 427-amino-acid chain; its full sequence is 3-phosphoshikimate 1-carboxyvinyltransferase (427 aa).

The 3-phosphoshikimate site is built by K20, S21, and R25. K20 serves as a coordination point for phosphoenolpyruvate. Phosphoenolpyruvate contacts are provided by G92 and R120. S166, Q168, D312, and K339 together coordinate 3-phosphoshikimate. Residue Q168 coordinates phosphoenolpyruvate. D312 serves as the catalytic Proton acceptor. Phosphoenolpyruvate-binding residues include R343 and R385.

Belongs to the EPSP synthase family. Monomer.

The protein localises to the cytoplasm. The catalysed reaction is 3-phosphoshikimate + phosphoenolpyruvate = 5-O-(1-carboxyvinyl)-3-phosphoshikimate + phosphate. Its pathway is metabolic intermediate biosynthesis; chorismate biosynthesis; chorismate from D-erythrose 4-phosphate and phosphoenolpyruvate: step 6/7. Functionally, catalyzes the transfer of the enolpyruvyl moiety of phosphoenolpyruvate (PEP) to the 5-hydroxyl of shikimate-3-phosphate (S3P) to produce enolpyruvyl shikimate-3-phosphate and inorganic phosphate. The protein is 3-phosphoshikimate 1-carboxyvinyltransferase of Streptococcus mutans serotype c (strain ATCC 700610 / UA159).